The primary structure comprises 209 residues: Ribosomal RNA large subunit methyltransferase E (209 aa).

Residues Gly-63, Trp-65, Asp-83, Asp-99, and Asp-124 each coordinate S-adenosyl-L-methionine. Residue Lys-164 is the Proton acceptor of the active site.

This sequence belongs to the class I-like SAM-binding methyltransferase superfamily. RNA methyltransferase RlmE family.

Its subcellular location is the cytoplasm. It carries out the reaction uridine(2552) in 23S rRNA + S-adenosyl-L-methionine = 2'-O-methyluridine(2552) in 23S rRNA + S-adenosyl-L-homocysteine + H(+). In terms of biological role, specifically methylates the uridine in position 2552 of 23S rRNA at the 2'-O position of the ribose in the fully assembled 50S ribosomal subunit. The polypeptide is Ribosomal RNA large subunit methyltransferase E (Shewanella halifaxensis (strain HAW-EB4)).